The following is a 150-amino-acid chain: Arginine repressor (150 aa).

This sequence belongs to the ArgR family.

It localises to the cytoplasm. It participates in amino-acid biosynthesis; L-arginine biosynthesis [regulation]. Its function is as follows. Regulates arginine biosynthesis genes. The polypeptide is Arginine repressor (Clostridium kluyveri (strain NBRC 12016)).